The sequence spans 923 residues: Carnitine O-acetyltransferase YAT2 (923 aa).

The segment covering 1 to 11 (MSSGSTIVSSD) has biased composition (polar residues). 2 disordered regions span residues 1-21 (MSSGSTIVSSDKSGRTFKHEE) and 197-232 (NKPYTASDLEDPDYSSDEDDNDEPTQKDFDDRKRKH). At Ser2 the chain carries N-acetylserine. A compositionally biased stretch (basic and acidic residues) spans 12-21 (KSGRTFKHEE). Residues 204–219 (DLEDPDYSSDEDDNDE) show a composition bias toward acidic residues. Residues 220–232 (PTQKDFDDRKRKH) are compositionally biased toward basic and acidic residues. Residues 529-541 (GRRSAQRLGVKPD) and Ser567 contribute to the CoA site. Residue Ser576 coordinates (R)-carnitine. The tract at residues 763–787 (NAVNNPPKRNGHTVNGSRKTSSSSQ) is disordered. Polar residues predominate over residues 774–787 (HTVNGSRKTSSSSQ). Phosphoserine is present on Ser783.

It belongs to the carnitine/choline acetyltransferase family.

The protein resides in the cytoplasm. It carries out the reaction (R)-carnitine + acetyl-CoA = O-acetyl-(R)-carnitine + CoA. Carnitine O-acetyltransferase involved in the shutteling of acetyl-CoA in the cell. The chain is Carnitine O-acetyltransferase YAT2 from Saccharomyces cerevisiae (strain ATCC 204508 / S288c) (Baker's yeast).